Reading from the N-terminus, the 321-residue chain is Lipoyl synthase (321 aa).

[4Fe-4S] cluster is bound by residues Cys-68, Cys-73, Cys-79, Cys-94, Cys-98, Cys-101, and Ser-308. The Radical SAM core domain occupies 80–297 (FNHGTATFMI…KALADELGFT (218 aa)).

The protein belongs to the radical SAM superfamily. Lipoyl synthase family. Requires [4Fe-4S] cluster as cofactor.

Its subcellular location is the cytoplasm. The catalysed reaction is [[Fe-S] cluster scaffold protein carrying a second [4Fe-4S](2+) cluster] + N(6)-octanoyl-L-lysyl-[protein] + 2 oxidized [2Fe-2S]-[ferredoxin] + 2 S-adenosyl-L-methionine + 4 H(+) = [[Fe-S] cluster scaffold protein] + N(6)-[(R)-dihydrolipoyl]-L-lysyl-[protein] + 4 Fe(3+) + 2 hydrogen sulfide + 2 5'-deoxyadenosine + 2 L-methionine + 2 reduced [2Fe-2S]-[ferredoxin]. Its pathway is protein modification; protein lipoylation via endogenous pathway; protein N(6)-(lipoyl)lysine from octanoyl-[acyl-carrier-protein]: step 2/2. Functionally, catalyzes the radical-mediated insertion of two sulfur atoms into the C-6 and C-8 positions of the octanoyl moiety bound to the lipoyl domains of lipoate-dependent enzymes, thereby converting the octanoylated domains into lipoylated derivatives. The sequence is that of Lipoyl synthase from Shewanella baltica (strain OS223).